A 1465-amino-acid polypeptide reads, in one-letter code: DNA polymerase III polC-type (1465 aa).

The Exonuclease domain maps to Y427–L583.

Belongs to the DNA polymerase type-C family. PolC subfamily.

The protein localises to the cytoplasm. The enzyme catalyses DNA(n) + a 2'-deoxyribonucleoside 5'-triphosphate = DNA(n+1) + diphosphate. In terms of biological role, required for replicative DNA synthesis. This DNA polymerase also exhibits 3' to 5' exonuclease activity. This chain is DNA polymerase III polC-type, found in Streptococcus pyogenes serotype M3 (strain ATCC BAA-595 / MGAS315).